The sequence spans 64 residues: Large ribosomal subunit protein bL33 (64 aa).

Belongs to the bacterial ribosomal protein bL33 family.

The chain is Large ribosomal subunit protein bL33 from Parasynechococcus marenigrum (strain WH8102).